The following is a 217-amino-acid chain: Probable transaldolase (217 aa).

Catalysis depends on Lys-83, which acts as the Schiff-base intermediate with substrate.

The protein belongs to the transaldolase family. Type 3B subfamily.

It localises to the cytoplasm. It carries out the reaction D-sedoheptulose 7-phosphate + D-glyceraldehyde 3-phosphate = D-erythrose 4-phosphate + beta-D-fructose 6-phosphate. Its pathway is carbohydrate degradation; pentose phosphate pathway; D-glyceraldehyde 3-phosphate and beta-D-fructose 6-phosphate from D-ribose 5-phosphate and D-xylulose 5-phosphate (non-oxidative stage): step 2/3. Transaldolase is important for the balance of metabolites in the pentose-phosphate pathway. In Caulobacter sp. (strain K31), this protein is Probable transaldolase.